A 554-amino-acid polypeptide reads, in one-letter code: Glypican-1 (554 aa).

The signal sequence occupies residues 1 to 21 (MERLCWGWWWHLGILCLMHWA). Intrachain disulfides connect cysteine 32–cysteine 68, cysteine 62–cysteine 256, cysteine 69–cysteine 259, cysteine 191–cysteine 343, cysteine 246–cysteine 279, cysteine 268–cysteine 415, and cysteine 272–cysteine 401. N-linked (GlcNAc...) asparagine glycosylation is found at asparagine 79 and asparagine 116. The segment at 346 to 369 (PKKTNKGSKSEERRRKGKATQEDK) is disordered. Basic and acidic residues predominate over residues 353-369 (SKSEERRRKGKATQEDK). Residues serine 486, serine 488, and serine 490 are each glycosylated (O-linked (Xyl...) (heparan sulfate) serine).

Belongs to the glypican family. Post-translationally, O-glycosylated with heparan sulfate side chains.

Its subcellular location is the cell membrane. It localises to the secreted. The protein resides in the extracellular space. Its function is as follows. Cell surface proteoglycan that bears heparan sulfate. The protein is Glypican-1 (gpc1) of Xenopus tropicalis (Western clawed frog).